The chain runs to 299 residues: Taste receptor type 2 member 50 (299 aa).

Residue Met-1 is a topological domain, extracellular. Residues 2 to 22 (ITFLYIFFSILILVLFVLGNF) traverse the membrane as a helical segment. At 23–55 (ANGFIALVNFIDWVKRKKISSADQILTALAVSR) the chain is on the cytoplasmic side. The chain crosses the membrane as a helical span at residues 56–76 (IGLLWALLLNWYLTVLNPAFY). Over 77 to 87 (SVELRITSYNA) the chain is Extracellular. A helical transmembrane segment spans residues 88–108 (WVVTNHFSMWLAASLSIFYLL). Over 109 to 126 (KIANFSNLIFLHLKRRVR) the chain is Cytoplasmic. Residues 127–147 (SVILVILLGTLIFLVCHLLVA) traverse the membrane as a helical segment. The Extracellular segment spans residues 148–181 (NMDESMWAEEYEGNMTGKMKLRNTVHLSYLTVTT). Asn-161 carries N-linked (GlcNAc...) asparagine glycosylation. The chain crosses the membrane as a helical span at residues 182–202 (LWSFIPFTLSLISFLMLICSL). Residues 203–229 (CKHLKKMQLHGEGSQDLSTKVHIKALQ) are Cytoplasmic-facing. Residues 230 to 250 (TLISFLLLCAIFFLFLIISVW) form a helical membrane-spanning segment. Residues 251-259 (SPRRLQNDP) are Extracellular-facing. Residues 260–280 (VVMVSKAVGNIYLAFDSFILI) traverse the membrane as a helical segment. The Cytoplasmic segment spans residues 281-299 (WRTKKLKHTFLLILCQIRC).

The protein belongs to the G-protein coupled receptor T2R family.

It is found in the membrane. Functionally, receptor that may play a role in the perception of bitterness and is gustducin-linked. May play a role in sensing the chemical composition of the gastrointestinal content. The activity of this receptor may stimulate alpha gustducin, mediate PLC-beta-2 activation and lead to the gating of TRPM5. The chain is Taste receptor type 2 member 50 (TAS2R50) from Gorilla gorilla gorilla (Western lowland gorilla).